The sequence spans 336 residues: Phospho-N-acetylmuramoyl-pentapeptide-transferase (336 aa).

10 helical membrane-spanning segments follow: residues 3–23 (LSIMAGVIAFVLTVIAIPRFI), 52–72 (MGGTVFLIVALLVSLIFSIIL), 79–99 (NLGATFGILSVVLIYGIIGFL), 123–143 (LIAGLIFYFVHVLPSGTSAIN), 144–164 (IFGFYLEVGYLYAFFVLFWVV), 175–195 (GIDGLASISVVISLITYGIIA), 201–221 (FDILLIIVIMIGALLGFFVFN), 227–247 (VFMGDVGSLALGAMLAAISIA), 255–275 (LFIGFVYVFETSSVMLQVAYF), and 315–335 (VDAFLWAIGIFMSAITLAILY).

This sequence belongs to the glycosyltransferase 4 family. MraY subfamily. Mg(2+) is required as a cofactor.

It localises to the cell membrane. The catalysed reaction is UDP-N-acetyl-alpha-D-muramoyl-L-alanyl-gamma-D-glutamyl-L-lysyl-D-alanyl-D-alanine + di-trans,octa-cis-undecaprenyl phosphate = Mur2Ac(oyl-L-Ala-gamma-D-Glu-L-Lys-D-Ala-D-Ala)-di-trans,octa-cis-undecaprenyl diphosphate + UMP. Its pathway is cell wall biogenesis; peptidoglycan biosynthesis. In terms of biological role, catalyzes the initial step of the lipid cycle reactions in the biosynthesis of the cell wall peptidoglycan: transfers peptidoglycan precursor phospho-MurNAc-pentapeptide from UDP-MurNAc-pentapeptide onto the lipid carrier undecaprenyl phosphate, yielding undecaprenyl-pyrophosphoryl-MurNAc-pentapeptide, known as lipid I. The sequence is that of Phospho-N-acetylmuramoyl-pentapeptide-transferase from Streptococcus agalactiae serotype Ia (strain ATCC 27591 / A909 / CDC SS700).